Reading from the N-terminus, the 83-residue chain is Small ribosomal subunit protein uS17 (83 aa).

The protein belongs to the universal ribosomal protein uS17 family. In terms of assembly, part of the 30S ribosomal subunit.

One of the primary rRNA binding proteins, it binds specifically to the 5'-end of 16S ribosomal RNA. The sequence is that of Small ribosomal subunit protein uS17 from Colwellia psychrerythraea (strain 34H / ATCC BAA-681) (Vibrio psychroerythus).